Reading from the N-terminus, the 150-residue chain is D-aminoacyl-tRNA deacylase (150 aa).

The Gly-cisPro motif, important for rejection of L-amino acids signature appears at 137–138 (GP).

Belongs to the DTD family. Homodimer.

It is found in the cytoplasm. It carries out the reaction glycyl-tRNA(Ala) + H2O = tRNA(Ala) + glycine + H(+). The catalysed reaction is a D-aminoacyl-tRNA + H2O = a tRNA + a D-alpha-amino acid + H(+). Its function is as follows. An aminoacyl-tRNA editing enzyme that deacylates mischarged D-aminoacyl-tRNAs. Also deacylates mischarged glycyl-tRNA(Ala), protecting cells against glycine mischarging by AlaRS. Acts via tRNA-based rather than protein-based catalysis; rejects L-amino acids rather than detecting D-amino acids in the active site. By recycling D-aminoacyl-tRNA to D-amino acids and free tRNA molecules, this enzyme counteracts the toxicity associated with the formation of D-aminoacyl-tRNA entities in vivo and helps enforce protein L-homochirality. The chain is D-aminoacyl-tRNA deacylase from Listeria monocytogenes serotype 4b (strain CLIP80459).